The following is a 426-amino-acid chain: Mediator of RNA polymerase II transcription subunit 1 (426 aa).

The interval 319–349 is disordered; it reads ISTSNSGSVQPKPRRKSSVLSNRRPSMTDSM. A compositionally biased stretch (polar residues) spans 336-347; sequence SVLSNRRPSMTD.

It belongs to the Mediator complex subunit 1 family. In terms of assembly, component of the Mediator complex.

Its subcellular location is the nucleus. In terms of biological role, component of the Mediator complex, a coactivator involved in the regulated transcription of nearly all RNA polymerase II-dependent genes. Mediator functions as a bridge to convey information from gene-specific regulatory proteins to the basal RNA polymerase II transcription machinery. Mediator is recruited to promoters by direct interactions with regulatory proteins and serves as a scaffold for the assembly of a functional preinitiation complex with RNA polymerase II and the general transcription factors. This Kluyveromyces lactis (strain ATCC 8585 / CBS 2359 / DSM 70799 / NBRC 1267 / NRRL Y-1140 / WM37) (Yeast) protein is Mediator of RNA polymerase II transcription subunit 1 (MED1).